The following is a 966-amino-acid chain: Glycine dehydrogenase (decarboxylating) (966 aa).

Lysine 713 is modified (N6-(pyridoxal phosphate)lysine).

It belongs to the GcvP family. The glycine cleavage system is composed of four proteins: P, T, L and H. Pyridoxal 5'-phosphate serves as cofactor.

The catalysed reaction is N(6)-[(R)-lipoyl]-L-lysyl-[glycine-cleavage complex H protein] + glycine + H(+) = N(6)-[(R)-S(8)-aminomethyldihydrolipoyl]-L-lysyl-[glycine-cleavage complex H protein] + CO2. The glycine cleavage system catalyzes the degradation of glycine. The P protein binds the alpha-amino group of glycine through its pyridoxal phosphate cofactor; CO(2) is released and the remaining methylamine moiety is then transferred to the lipoamide cofactor of the H protein. This is Glycine dehydrogenase (decarboxylating) from Shewanella halifaxensis (strain HAW-EB4).